The sequence spans 415 residues: Serine hydroxymethyltransferase 2 (415 aa).

(6S)-5,6,7,8-tetrahydrofolate-binding positions include Leu-121 and 125–127 (GHL). Lys-229 carries the N6-(pyridoxal phosphate)lysine modification.

Belongs to the SHMT family. As to quaternary structure, homodimer. The cofactor is pyridoxal 5'-phosphate.

Its subcellular location is the cytoplasm. The enzyme catalyses (6R)-5,10-methylene-5,6,7,8-tetrahydrofolate + glycine + H2O = (6S)-5,6,7,8-tetrahydrofolate + L-serine. The protein operates within one-carbon metabolism; tetrahydrofolate interconversion. It participates in amino-acid biosynthesis; glycine biosynthesis; glycine from L-serine: step 1/1. Catalyzes the reversible interconversion of serine and glycine with tetrahydrofolate (THF) serving as the one-carbon carrier. This reaction serves as the major source of one-carbon groups required for the biosynthesis of purines, thymidylate, methionine, and other important biomolecules. Also exhibits THF-independent aldolase activity toward beta-hydroxyamino acids, producing glycine and aldehydes, via a retro-aldol mechanism. The protein is Serine hydroxymethyltransferase 2 of Bordetella parapertussis (strain 12822 / ATCC BAA-587 / NCTC 13253).